A 104-amino-acid chain; its full sequence is MRIKNKIKKRIIELIDLAYITARKGDLELAREYIKLAEMYSRKGRVKIPLKYKRMFCRKCYTPLITGVTERRRIRSKILIRTCLICNWQRRYVLSRNKGSNKEN.

Residues Cys57, Cys60, Cys83, and Cys86 each contribute to the Zn(2+) site.

It belongs to the eukaryotic/archaeal RNase P protein component 4 family. In terms of assembly, consists of a catalytic RNA component and at least 4-5 protein subunits. Requires Zn(2+) as cofactor.

The protein resides in the cytoplasm. It carries out the reaction Endonucleolytic cleavage of RNA, removing 5'-extranucleotides from tRNA precursor.. Part of ribonuclease P, a protein complex that generates mature tRNA molecules by cleaving their 5'-ends. The sequence is that of Ribonuclease P protein component 4 from Saccharolobus islandicus (strain M.16.27) (Sulfolobus islandicus).